The following is a 271-amino-acid chain: GPN-loop GTPase 3 (271 aa).

13-18 (GVGKST) lines the GTP pocket. Residues 70-72 (GPN) carry the Gly-Pro-Asn (GPN)-loop; involved in dimer interface motif. Position 173 to 176 (173 to 176 (SKMD)) interacts with GTP.

It belongs to the GPN-loop GTPase family. In terms of assembly, heterodimers with GPN1 or GPN2. Binds to RNA polymerase II (RNAPII).

In terms of biological role, small GTPase required for proper nuclear import of RNA polymerase II and III (RNAPII and RNAPIII). May act at an RNAP assembly step prior to nuclear import. In Yarrowia lipolytica (strain CLIB 122 / E 150) (Yeast), this protein is GPN-loop GTPase 3.